Reading from the N-terminus, the 163-residue chain is Thiol peroxidase (163 aa).

Positions 16–162 (LQVGDTAHDF…YDAAIAAVKS (147 aa)) constitute a Thioredoxin domain. Cys-58 serves as the catalytic Cysteine sulfenic acid (-SOH) intermediate. Cys-58 and Cys-92 form a disulfide bridge.

This sequence belongs to the peroxiredoxin family. Tpx subfamily. In terms of assembly, homodimer.

It catalyses the reaction a hydroperoxide + [thioredoxin]-dithiol = an alcohol + [thioredoxin]-disulfide + H2O. In terms of biological role, thiol-specific peroxidase that catalyzes the reduction of hydrogen peroxide and organic hydroperoxides to water and alcohols, respectively. Plays a role in cell protection against oxidative stress by detoxifying peroxides. The polypeptide is Thiol peroxidase (Streptococcus sanguinis).